The following is a 204-amino-acid chain: Lipid A acyltransferase PagP (204 aa).

A signal peptide spans 1–25 (MSYKHLISACIFSSLCLGQVNAVLA). Catalysis depends on residues His-76, Asp-119, and Ser-120.

Belongs to the lipid A palmitoyltransferase family. In terms of assembly, homodimer.

It is found in the cell outer membrane. It carries out the reaction a lipid A + a 1,2-diacyl-sn-glycero-3-phosphocholine = a hepta-acyl lipid A + a 2-acyl-sn-glycero-3-phosphocholine. The catalysed reaction is a lipid IVA + a 1,2-diacyl-sn-glycero-3-phosphocholine = a lipid IVB + a 2-acyl-sn-glycero-3-phosphocholine. It catalyses the reaction a lipid IIA + a 1,2-diacyl-sn-glycero-3-phosphocholine = a lipid IIB + a 2-acyl-sn-glycero-3-phosphocholine. In terms of biological role, transfers a fatty acid residue from the sn-1 position of a phospholipid to the N-linked hydroxyfatty acid chain on the proximal unit of lipid A or its precursors. The protein is Lipid A acyltransferase PagP of Yersinia enterocolitica serotype O:8 / biotype 1B (strain NCTC 13174 / 8081).